A 185-amino-acid polypeptide reads, in one-letter code: Ribosome-recycling factor (185 aa).

Belongs to the RRF family.

The protein resides in the cytoplasm. Its function is as follows. Responsible for the release of ribosomes from messenger RNA at the termination of protein biosynthesis. May increase the efficiency of translation by recycling ribosomes from one round of translation to another. The chain is Ribosome-recycling factor from Salmonella arizonae (strain ATCC BAA-731 / CDC346-86 / RSK2980).